Here is a 329-residue protein sequence, read N- to C-terminus: UDP-2,3-diacylglucosamine pyrophosphatase LpxG (329 aa).

The chain crosses the membrane as a helical span at residues 2 to 24 (FVFVGSTVSLTAIVAAPVLTWIW). Residues Asp-59, His-61, Asp-91, Asn-123, His-257, and His-259 each coordinate a divalent metal cation.

This sequence belongs to the metallophosphoesterase superfamily. Mn(2+) serves as cofactor.

It localises to the cell inner membrane. The enzyme catalyses UDP-2,3-diacyl-alpha-D-glucosamine + H2O = 2,3-diacyl-alpha-D-glucosaminyl 1-phosphate + UMP + 2 H(+). It functions in the pathway glycolipid biosynthesis; lipid IV(A) biosynthesis. Hydrolyzes the pyrophosphate bond of UDP-2,3-diacylglucosamine to form 2,3-diacylglucosamine 1-phosphate (lipid X) and UMP by catalyzing the attack of water at the alpha-P atom. Involved in the biosynthesis of lipid A, a phosphorylated glycolipid that anchors the lipooligosaccharide (LOS) to the outer membrane of the cell. This Chlamydia muridarum (strain MoPn / Nigg) protein is UDP-2,3-diacylglucosamine pyrophosphatase LpxG.